The primary structure comprises 296 residues: Uracil phosphoribosyltransferase, chloroplastic (296 aa).

The N-terminal 61 residues, 1–61 (MACSIGNAFR…SSSLSRRTIR (61 aa)), are a transit peptide targeting the chloroplast. Ala2 carries the N-acetylalanine modification. 148–151 (REPI) is a GTP binding site. Residues Arg158, Arg183, Asp211, 216–219 (TGGT), and Asp282 contribute to the 5-phospho-alpha-D-ribose 1-diphosphate site. 281–283 (GDA) lines the uracil pocket.

It belongs to the UPRTase family. Mg(2+) serves as cofactor.

The protein resides in the plastid. It is found in the chloroplast. It carries out the reaction UMP + diphosphate = 5-phospho-alpha-D-ribose 1-diphosphate + uracil. The protein operates within pyrimidine metabolism; UMP biosynthesis via salvage pathway; UMP from uracil: step 1/1. Its activity is regulated as follows. Allosterically activated by GTP. Functionally, uracil phosphoribosyltransferase (UPRT) that catalyzes the conversion of uracil and 5-phospho-alpha-D-ribose 1-diphosphate (PRPP) to UMP and diphosphate. Is probably the only functional UPRT, since the dual-domain proteins of the UKL family seem to lack this activity. The polypeptide is Uracil phosphoribosyltransferase, chloroplastic (UPP) (Arabidopsis thaliana (Mouse-ear cress)).